A 776-amino-acid polypeptide reads, in one-letter code: Lon protease (776 aa).

The Lon N-terminal domain maps to 12–209 (LPIIALRGLW…LVYKFVIKEI (198 aa)). ATP is bound at residue 360–367 (GPPGVGKT). One can recognise a Lon proteolytic domain in the interval 596 to 776 (EDTVGVVNGL…VKEILDEVLI (181 aa)). Active-site residues include Ser-683 and Lys-726.

This sequence belongs to the peptidase S16 family. Homohexamer. Organized in a ring with a central cavity.

The protein resides in the cytoplasm. The catalysed reaction is Hydrolysis of proteins in presence of ATP.. ATP-dependent serine protease that mediates the selective degradation of mutant and abnormal proteins as well as certain short-lived regulatory proteins. Required for cellular homeostasis and for survival from DNA damage and developmental changes induced by stress. Degrades polypeptides processively to yield small peptide fragments that are 5 to 10 amino acids long. Binds to DNA in a double-stranded, site-specific manner. This is Lon protease from Finegoldia magna (strain ATCC 29328 / DSM 20472 / WAL 2508) (Peptostreptococcus magnus).